The chain runs to 65 residues: UPF0337 protein PA4738 (65 aa).

It belongs to the UPF0337 (CsbD) family.

The protein is UPF0337 protein PA4738 of Pseudomonas aeruginosa (strain ATCC 15692 / DSM 22644 / CIP 104116 / JCM 14847 / LMG 12228 / 1C / PRS 101 / PAO1).